The primary structure comprises 198 residues: Inner membrane-spanning protein YciB (198 aa).

5 consecutive transmembrane segments (helical) span residues 36–56, 64–84, 90–110, 135–155, and 162–182; these read IYSATAMLIVSSVVVYGALFL, GQLLTLVACLVFGGLTLAFHS, WKAPVVNWLFALAFAGSHFIG, VAWIGFFLVCGAANLFVAFTF, and FKVFGSLGMTVIFLVAQGVYL.

The protein belongs to the YciB family.

The protein localises to the cell inner membrane. Plays a role in cell envelope biogenesis, maintenance of cell envelope integrity and membrane homeostasis. The polypeptide is Inner membrane-spanning protein YciB (Pseudomonas entomophila (strain L48)).